Consider the following 247-residue polypeptide: Cytochrome c oxidase subunit 2 (247 aa).

An N-terminal signal peptide occupies residues 1–11 (MLLIINNIINN). Topologically, residues 12–38 (DVPTPWGVYFQDSATPNHEGIIELHDN) are mitochondrial intermembrane. The chain crosses the membrane as a helical span at residues 39–59 (IMFYLVLILCLVSWLLFSIVK). Residues 60 to 78 (DGSKNPLPHKYLVHGQTIE) lie on the Mitochondrial matrix side of the membrane. Residues 79 to 101 (IIWTILPALVLLVIAFPSFILLY) traverse the membrane as a helical segment. Over 102-247 (LCDEVISPAM…KEFLTWLNEQ (146 aa)) the chain is Mitochondrial intermembrane. Residues H182, C217, E219, C221, H225, and M228 each contribute to the Cu cation site. Residue E219 participates in Mg(2+) binding.

It belongs to the cytochrome c oxidase subunit 2 family. Component of the cytochrome c oxidase (complex IV, CIV), a multisubunit enzyme composed of a catalytic core of 3 subunits and several supernumerary subunits. The complex exists as a monomer or a dimer and forms supercomplexes (SCs) in the inner mitochondrial membrane with ubiquinol-cytochrome c oxidoreductase (cytochrome b-c1 complex, complex III, CIII). Cu cation is required as a cofactor. Post-translationally, the signal sequence of COX2 is processed by IMP1.

It localises to the mitochondrion inner membrane. The enzyme catalyses 4 Fe(II)-[cytochrome c] + O2 + 8 H(+)(in) = 4 Fe(III)-[cytochrome c] + 2 H2O + 4 H(+)(out). In terms of biological role, component of the cytochrome c oxidase, the last enzyme in the mitochondrial electron transport chain which drives oxidative phosphorylation. The respiratory chain contains 3 multisubunit complexes succinate dehydrogenase (complex II, CII), ubiquinol-cytochrome c oxidoreductase (cytochrome b-c1 complex, complex III, CIII) and cytochrome c oxidase (complex IV, CIV), that cooperate to transfer electrons derived from NADH and succinate to molecular oxygen, creating an electrochemical gradient over the inner membrane that drives transmembrane transport and the ATP synthase. Cytochrome c oxidase is the component of the respiratory chain that catalyzes the reduction of oxygen to water. Electrons originating from reduced cytochrome c in the intermembrane space (IMS) are transferred via the dinuclear copper A center (CU(A)) of subunit 2 and heme A of subunit 1 to the active site in subunit 1, a binuclear center (BNC) formed by heme A3 and copper B (CU(B)). The BNC reduces molecular oxygen to 2 water molecules using 4 electrons from cytochrome c in the IMS and 4 protons from the mitochondrial matrix. In Wickerhamomyces canadensis (Yeast), this protein is Cytochrome c oxidase subunit 2 (COX2).